Reading from the N-terminus, the 303-residue chain is UDP-3-O-acyl-N-acetylglucosamine deacetylase (303 aa).

Residues histidine 78, histidine 237, and aspartate 241 each contribute to the Zn(2+) site. Residue histidine 264 is the Proton donor of the active site.

It belongs to the LpxC family. The cofactor is Zn(2+).

The catalysed reaction is a UDP-3-O-[(3R)-3-hydroxyacyl]-N-acetyl-alpha-D-glucosamine + H2O = a UDP-3-O-[(3R)-3-hydroxyacyl]-alpha-D-glucosamine + acetate. Its pathway is glycolipid biosynthesis; lipid IV(A) biosynthesis; lipid IV(A) from (3R)-3-hydroxytetradecanoyl-[acyl-carrier-protein] and UDP-N-acetyl-alpha-D-glucosamine: step 2/6. In terms of biological role, catalyzes the hydrolysis of UDP-3-O-myristoyl-N-acetylglucosamine to form UDP-3-O-myristoylglucosamine and acetate, the committed step in lipid A biosynthesis. This Chromohalobacter salexigens (strain ATCC BAA-138 / DSM 3043 / CIP 106854 / NCIMB 13768 / 1H11) protein is UDP-3-O-acyl-N-acetylglucosamine deacetylase.